Consider the following 222-residue polypeptide: Triosephosphate isomerase (222 aa).

9-11 (NYK) provides a ligand contact to substrate. Residue H93 is the Electrophile of the active site. The Proton acceptor role is filled by E141. Substrate contacts are provided by residues I146, G181, and 202 to 203 (AS).

This sequence belongs to the triosephosphate isomerase family. In terms of assembly, homotetramer; dimer of dimers.

It localises to the cytoplasm. The catalysed reaction is D-glyceraldehyde 3-phosphate = dihydroxyacetone phosphate. It functions in the pathway carbohydrate biosynthesis; gluconeogenesis. It participates in carbohydrate degradation; glycolysis; D-glyceraldehyde 3-phosphate from glycerone phosphate: step 1/1. Functionally, involved in the gluconeogenesis. Catalyzes stereospecifically the conversion of dihydroxyacetone phosphate (DHAP) to D-glyceraldehyde-3-phosphate (G3P). The sequence is that of Triosephosphate isomerase from Methanobrevibacter smithii (strain ATCC 35061 / DSM 861 / OCM 144 / PS).